The primary structure comprises 228 residues: Phosphoribosylformylglycinamidine synthase subunit PurQ (228 aa).

A Glutamine amidotransferase type-1 domain is found at 3–226 (FAVIVFPGSN…IANWRDSYAI (224 aa)). The active-site Nucleophile is the Cys-87. Active-site residues include His-195 and Glu-197.

As to quaternary structure, part of the FGAM synthase complex composed of 1 PurL, 1 PurQ and 2 PurS subunits.

The protein resides in the cytoplasm. The catalysed reaction is N(2)-formyl-N(1)-(5-phospho-beta-D-ribosyl)glycinamide + L-glutamine + ATP + H2O = 2-formamido-N(1)-(5-O-phospho-beta-D-ribosyl)acetamidine + L-glutamate + ADP + phosphate + H(+). The enzyme catalyses L-glutamine + H2O = L-glutamate + NH4(+). It participates in purine metabolism; IMP biosynthesis via de novo pathway; 5-amino-1-(5-phospho-D-ribosyl)imidazole from N(2)-formyl-N(1)-(5-phospho-D-ribosyl)glycinamide: step 1/2. Functionally, part of the phosphoribosylformylglycinamidine synthase complex involved in the purines biosynthetic pathway. Catalyzes the ATP-dependent conversion of formylglycinamide ribonucleotide (FGAR) and glutamine to yield formylglycinamidine ribonucleotide (FGAM) and glutamate. The FGAM synthase complex is composed of three subunits. PurQ produces an ammonia molecule by converting glutamine to glutamate. PurL transfers the ammonia molecule to FGAR to form FGAM in an ATP-dependent manner. PurS interacts with PurQ and PurL and is thought to assist in the transfer of the ammonia molecule from PurQ to PurL. The sequence is that of Phosphoribosylformylglycinamidine synthase subunit PurQ from Oceanobacillus iheyensis (strain DSM 14371 / CIP 107618 / JCM 11309 / KCTC 3954 / HTE831).